We begin with the raw amino-acid sequence, 256 residues long: Small ribosomal subunit protein eS1 (256 aa).

Ala-2 is subject to N-acetylalanine; partial.

Belongs to the eukaryotic ribosomal protein eS1 family. Component of the small ribosomal subunit. Mature ribosomes consist of a small (40S) and a large (60S) subunit. The 40S subunit contains about 33 different proteins and 1 molecule of RNA (18S). The 60S subunit contains about 49 different proteins and 3 molecules of RNA (25S, 5.8S and 5S).

Its subcellular location is the cytoplasm. The polypeptide is Small ribosomal subunit protein eS1 (Eremothecium gossypii (strain ATCC 10895 / CBS 109.51 / FGSC 9923 / NRRL Y-1056) (Yeast)).